The primary structure comprises 110 residues: T cell receptor alpha variable 22 (110 aa).

An N-terminal signal peptide occupies residues 1-21 (MKRILGALLGLLSAQVCCVRG). The Ig-like domain occupies 22 to 110 (IQVEQSPPDL…DSGVYFCAVE (89 aa)). N-linked (GlcNAc...) asparagine glycans are attached at residues N38 and N44. C43 and C107 form a disulfide bridge.

As to quaternary structure, alpha-beta TR is a heterodimer composed of an alpha and beta chain; disulfide-linked. The alpha-beta TR is associated with the transmembrane signaling CD3 coreceptor proteins to form the TR-CD3 (TcR or TCR). The assembly of alpha-beta TR heterodimers with CD3 occurs in the endoplasmic reticulum where a single alpha-beta TR heterodimer associates with one CD3D-CD3E heterodimer, one CD3G-CD3E heterodimer and one CD247 homodimer forming a stable octameric structure. CD3D-CD3E and CD3G-CD3E heterodimers preferentially associate with TR alpha and TR beta chains, respectively. The association of the CD247 homodimer is the last step of TcR assembly in the endoplasmic reticulum and is required for transport to the cell surface.

It is found in the cell membrane. Functionally, v region of the variable domain of T cell receptor (TR) alpha chain that participates in the antigen recognition. Alpha-beta T cell receptors are antigen specific receptors which are essential to the immune response and are present on the cell surface of T lymphocytes. Recognize peptide-major histocompatibility (MH) (pMH) complexes that are displayed by antigen presenting cells (APC), a prerequisite for efficient T cell adaptive immunity against pathogens. Binding of alpha-beta TR to pMH complex initiates TR-CD3 clustering on the cell surface and intracellular activation of LCK that phosphorylates the ITAM motifs of CD3G, CD3D, CD3E and CD247 enabling the recruitment of ZAP70. In turn ZAP70 phosphorylates LAT, which recruits numerous signaling molecules to form the LAT signalosome. The LAT signalosome propagates signal branching to three major signaling pathways, the calcium, the mitogen-activated protein kinase (MAPK) kinase and the nuclear factor NF-kappa-B (NF-kB) pathways, leading to the mobilization of transcription factors that are critical for gene expression and essential for T cell growth and differentiation. The T cell repertoire is generated in the thymus, by V-(D)-J rearrangement. This repertoire is then shaped by intrathymic selection events to generate a peripheral T cell pool of self-MH restricted, non-autoaggressive T cells. Post-thymic interaction of alpha-beta TR with the pMH complexes shapes TR structural and functional avidity. The polypeptide is T cell receptor alpha variable 22 (Homo sapiens (Human)).